Consider the following 225-residue polypeptide: THAP domain-containing protein 1 B (225 aa).

The segment at 5 to 57 (CSAYGCKNRYDKDRPISFHKFPLKRPLLCKKWEAAVRRADFKPTKYSSICSDH) adopts a THAP-type zinc-finger fold. A coiled-coil region spans residues 139 to 194 (VEDTVHQRRRIQQLEEQVDKLRKKLKIANQKCRRQERSLEKLEKEVSEYREAKGSG).

Belongs to the THAP1 family.

Its subcellular location is the nucleus. The protein resides in the nucleoplasm. In terms of biological role, DNA-binding transcription regulator that regulates endothelial cell proliferation and G1/S cell-cycle progression. Specifically binds the 5'-[AT]NTNN[GT]GGCA[AGT]-3' core DNA sequence and acts by modulating expression of pRB-E2F cell-cycle target genes. The chain is THAP domain-containing protein 1 B (thap1-b) from Xenopus laevis (African clawed frog).